The primary structure comprises 336 residues: Methionyl-tRNA formyltransferase (336 aa).

112-115 (SILP) lines the (6S)-5,6,7,8-tetrahydrofolate pocket.

This sequence belongs to the Fmt family.

It catalyses the reaction L-methionyl-tRNA(fMet) + (6R)-10-formyltetrahydrofolate = N-formyl-L-methionyl-tRNA(fMet) + (6S)-5,6,7,8-tetrahydrofolate + H(+). Functionally, attaches a formyl group to the free amino group of methionyl-tRNA(fMet). The formyl group appears to play a dual role in the initiator identity of N-formylmethionyl-tRNA by promoting its recognition by IF2 and preventing the misappropriation of this tRNA by the elongation apparatus. This chain is Methionyl-tRNA formyltransferase, found in Trichodesmium erythraeum (strain IMS101).